The sequence spans 547 residues: Trigger factor-like protein TIG, Chloroplastic (547 aa).

A chloroplast-targeting transit peptide spans M1–A77. Residue A78 is modified to N-acetylalanine. Residues G271–D366 enclose the PPIase FKBP-type domain.

It belongs to the FKBP-type PPIase family. Tig subfamily.

It localises to the plastid. The protein resides in the chloroplast. It catalyses the reaction [protein]-peptidylproline (omega=180) = [protein]-peptidylproline (omega=0). Functionally, involved in protein export. Acts as a chaperone by maintaining the newly synthesized protein in an open conformation. Functions as a peptidyl-prolyl cis-trans isomerase. The protein is Trigger factor-like protein TIG, Chloroplastic (TIG) of Arabidopsis thaliana (Mouse-ear cress).